The following is a 105-amino-acid chain: Large ribosomal subunit protein uL24 (105 aa).

Belongs to the universal ribosomal protein uL24 family. In terms of assembly, part of the 50S ribosomal subunit.

In terms of biological role, one of two assembly initiator proteins, it binds directly to the 5'-end of the 23S rRNA, where it nucleates assembly of the 50S subunit. Functionally, one of the proteins that surrounds the polypeptide exit tunnel on the outside of the subunit. In Methylococcus capsulatus (strain ATCC 33009 / NCIMB 11132 / Bath), this protein is Large ribosomal subunit protein uL24.